Reading from the N-terminus, the 74-residue chain is ATP synthase subunit 9, mitochondrial (74 aa).

2 helical membrane-spanning segments follow: residues 8-28 (IGAG…GNVF) and 50-70 (ILGF…AFLI).

It belongs to the ATPase C chain family. As to quaternary structure, F-type ATPases have 2 components, CF(1) - the catalytic core - and CF(0) - the membrane proton channel. CF(1) has five subunits: alpha(3), beta(3), gamma(1), delta(1), epsilon(1). CF(0) has three main subunits: a, b and c.

It localises to the mitochondrion membrane. Its function is as follows. This protein is one of the chains of the nonenzymatic membrane component (F0) of mitochondrial ATPase. This is ATP synthase subunit 9, mitochondrial (ATP9) from Brassica napus (Rape).